The chain runs to 70 residues: ATP synthase subunit c (70 aa).

Transmembrane regions (helical) follow at residues 4 to 24 (IASA…NGLI) and 47 to 67 (FVGV…AFMV).

It belongs to the ATPase C chain family. As to quaternary structure, F-type ATPases have 2 components, F(1) - the catalytic core - and F(0) - the membrane proton channel. F(1) has five subunits: alpha(3), beta(3), gamma(1), delta(1), epsilon(1). F(0) has three main subunits: a(1), b(2) and c(10-14). The alpha and beta chains form an alternating ring which encloses part of the gamma chain. F(1) is attached to F(0) by a central stalk formed by the gamma and epsilon chains, while a peripheral stalk is formed by the delta and b chains.

Its subcellular location is the cell membrane. In terms of biological role, f(1)F(0) ATP synthase produces ATP from ADP in the presence of a proton or sodium gradient. F-type ATPases consist of two structural domains, F(1) containing the extramembraneous catalytic core and F(0) containing the membrane proton channel, linked together by a central stalk and a peripheral stalk. During catalysis, ATP synthesis in the catalytic domain of F(1) is coupled via a rotary mechanism of the central stalk subunits to proton translocation. Functionally, key component of the F(0) channel; it plays a direct role in translocation across the membrane. A homomeric c-ring of between 10-14 subunits forms the central stalk rotor element with the F(1) delta and epsilon subunits. This Priestia megaterium (strain ATCC 12872 / QMB1551) (Bacillus megaterium) protein is ATP synthase subunit c.